The chain runs to 394 residues: NAD(P)H-quinone oxidoreductase subunit H 2 (394 aa).

It belongs to the complex I 49 kDa subunit family. In terms of assembly, NDH-1 can be composed of about 15 different subunits; different subcomplexes with different compositions have been identified which probably have different functions.

It localises to the cell inner membrane. It catalyses the reaction a plastoquinone + NADH + (n+1) H(+)(in) = a plastoquinol + NAD(+) + n H(+)(out). The catalysed reaction is a plastoquinone + NADPH + (n+1) H(+)(in) = a plastoquinol + NADP(+) + n H(+)(out). Functionally, NDH-1 shuttles electrons from an unknown electron donor, via FMN and iron-sulfur (Fe-S) centers, to quinones in the respiratory and/or the photosynthetic chain. The immediate electron acceptor for the enzyme in this species is believed to be plastoquinone. Couples the redox reaction to proton translocation, and thus conserves the redox energy in a proton gradient. Cyanobacterial NDH-1 also plays a role in inorganic carbon-concentration. This Gloeobacter violaceus (strain ATCC 29082 / PCC 7421) protein is NAD(P)H-quinone oxidoreductase subunit H 2.